Here is an 892-residue protein sequence, read N- to C-terminus: Alpha-actinin-1 (892 aa).

M1 is modified (N-acetylmethionine). The segment at 1–247 (MDHYDSQQTN…IMTYVSSFYH (247 aa)) is actin-binding. S6 carries the post-translational modification Phosphoserine. A Phosphotyrosine; by FAK1 modification is found at Y12. Calponin-homology (CH) domains are found at residues 31 to 135 (KQQR…LRFA) and 144 to 250 (TSAK…HAFS). Residues K95 and K195 each carry the N6-acetyllysine modification. 4 Spectrin repeats span residues 274-384 (QLME…WLLN), 394-499 (HLAE…ALER), 509-620 (QLYL…ALTE), and 630-733 (RLRK…EVEN). Residues 274–733 (QLMEDYEKLA…IARTINEVEN (460 aa)) form an interaction with DDN region. Residue S471 is modified to Phosphoserine. N6-acetyllysine is present on K676. Position 677 is a phosphoserine (S677). EF-hand domains lie at 746–781 (EQMN…LGYD) and 787–822 (QGEA…ETAD). Residues D759, D761, S763, T765, and E770 each contribute to the Ca(2+) site. A Phosphoserine modification is found at S890.

It belongs to the alpha-actinin family. In terms of assembly, homodimer; antiparallel. Interacts with MYOZ2, TTID and LPP. Interacts with DDN. Interacts with PSD. Interacts with MICALL2. Interacts with DNM2 and CTTN. Interacts with PDLIM1. Interacts with PDLIM2. Interacts with PDLIM4 (via PDZ domain). Interacts with IGSF8.

It is found in the cytoplasm. The protein resides in the cytoskeleton. The protein localises to the myofibril. It localises to the sarcomere. Its subcellular location is the z line. It is found in the cell membrane. The protein resides in the cell junction. The protein localises to the cell projection. It localises to the ruffle. Its function is as follows. F-actin cross-linking protein which is thought to anchor actin to a variety of intracellular structures. Association with IGSF8 regulates the immune synapse formation and is required for efficient T-cell activation. The chain is Alpha-actinin-1 (Actn1) from Rattus norvegicus (Rat).